A 303-amino-acid chain; its full sequence is Counting factor 50 (303 aa).

The N-terminal stretch at 1-24 is a signal peptide; that stretch reads MNKMNNIFLIISSIILSIVIFVSG. A Ch-type lysozyme domain is found at 28 to 240; the sequence is IDFSSEISVG…CSTSSGSASG (213 aa). Asn-67 carries an N-linked (GlcNAc...) asparagine glycan. Glu-125 is a catalytic residue. Asn-170 carries N-linked (GlcNAc...) asparagine glycosylation. Residues 226 to 303 are S-G-S motif repeats; that stretch reads GSGSGCSTSS…GSGTGSGSSI (78 aa). Residues 236–292 show a composition bias toward low complexity; it reads GSASGSASGSASGSASGSNSGSSNSGSSNSGSSNSGSNSGSSNSGSGNSGSSNSGSA. A disordered region spans residues 236–303; the sequence is GSASGSASGS…GSGTGSGSSI (68 aa). The span at 293–303 shows a compositional bias: gly residues; that stretch reads SGSGTGSGSSI.

It belongs to the glycosyl hydrolase 25 family. In terms of assembly, monomer. Component of the counting factor (CF) complex, which includes cf60, cf50, cf45-1 and ctnA.

It is found in the secreted. It carries out the reaction Hydrolysis of (1-&gt;4)-beta-linkages between N-acetylmuramic acid and N-acetyl-D-glucosamine residues in a peptidoglycan and between N-acetyl-D-glucosamine residues in chitodextrins.. Its function is as follows. Cell-counting factor that limits the maximum size of the multicellular structure during aggregation. Has a very low lysozyme activity. The chain is Counting factor 50 (cf50-1) from Dictyostelium discoideum (Social amoeba).